A 550-amino-acid polypeptide reads, in one-letter code: Aspartate--tRNA ligase (550 aa).

E162 serves as a coordination point for L-aspartate. The segment at 186-189 is aspartate; the sequence is QIYK. R208 is a binding site for L-aspartate. Residues 208 to 210 and Q217 contribute to the ATP site; that span reads RDE. H417 serves as a coordination point for L-aspartate. An ATP-binding site is contributed by E451. R458 is a binding site for L-aspartate. 499–502 is a binding site for ATP; the sequence is GIDR.

The protein belongs to the class-II aminoacyl-tRNA synthetase family. Type 1 subfamily. Homodimer.

It is found in the cytoplasm. The enzyme catalyses tRNA(Asp) + L-aspartate + ATP = L-aspartyl-tRNA(Asp) + AMP + diphosphate. Functionally, catalyzes the attachment of L-aspartate to tRNA(Asp) in a two-step reaction: L-aspartate is first activated by ATP to form Asp-AMP and then transferred to the acceptor end of tRNA(Asp). This chain is Aspartate--tRNA ligase, found in Mycoplasma genitalium (strain ATCC 33530 / DSM 19775 / NCTC 10195 / G37) (Mycoplasmoides genitalium).